Consider the following 334-residue polypeptide: RNA ligase 2 (334 aa).

Residues 1–234 (MFKKYSSLEN…KCKNSKFSEK (234 aa)) are adenylyltransferase. Positions 34, 35, 36, 40, 55, and 99 each coordinate AMP. Lys35 functions as the N6-AMP-lysine intermediate in the catalytic mechanism. Residues Ile162, Leu164, Asn166, Glu204, and Tyr206 each coordinate Mg(2+). Residues Lys225 and Lys227 each contribute to the AMP site.

It belongs to the RNA ligase 2 family. It depends on Mg(2+) as a cofactor. The cofactor is Mn(2+).

The catalysed reaction is ATP + (ribonucleotide)n-3'-hydroxyl + 5'-phospho-(ribonucleotide)m = (ribonucleotide)n+m + AMP + diphosphate.. Its function is as follows. Repairs 3'-OH/5'-PO4 nicks in duplex RNA or RNA:DNA hybrid in which the broken 3'-OH strand is RNA. The nick ligation reaction entails three nucleotidyl transfer steps. In the first step, the RNA ligase reacts with ATP in the absence of nucleic acid to form a covalent ligase-AMP intermediate and release pyrophosphate. In step 2, the ligase-AMP binds to the nicked duplex nucleic acid and transfers the adenylate to the 5'-PO4 terminus to form an adenylylated nicked intermediate. In step 3, the RNA ligase directs the attack of the nick 3'-OH on the 5'-phosphoanhydride linkage, resulting in a repaired 3' - 5' phosphodiester and release of AMP. In Enterobacteria phage T4 (Bacteriophage T4), this protein is RNA ligase 2 (Y10A).